The sequence spans 32 residues: MSDIN-like toxin proprotein 3 (32 aa).

A propeptide spanning residues 1–10 (MSDINATRLP) is cleaved from the precursor. Positions 11–17 (VWIGYSP) form a cross-link, cyclopeptide (Val-Pro). The propeptide occupies 18–32 (CVGDDAVALLNRGEG).

The protein belongs to the MSDIN fungal toxin family. In terms of processing, processed by the macrocyclase-peptidase enzyme POPB to yield a toxic cyclic heptapeptide. POPB first removes 10 residues from the N-terminus. Conformational trapping of the remaining peptide forces the enzyme to release this intermediate rather than proceed to macrocyclization. The enzyme rebinds the remaining peptide in a different conformation and catalyzes macrocyclization of the N-terminal 7 residues.

In terms of biological role, probable toxin that belongs to the MSDIN-like toxin family responsible for a large number of food poisoning cases and deaths. This is MSDIN-like toxin proprotein 3 from Amanita fuligineoides.